Consider the following 380-residue polypeptide: Alcohol dehydrogenase-like 4 (380 aa).

The Zn(2+) site is built by Cys-47, Thr-49, His-70, Cys-100, Cys-103, Cys-106, Cys-114, and Cys-180. Thr-49 and His-70 together coordinate an alcohol. An NAD(+)-binding site is contributed by Thr-49. NAD(+) is bound by residues 205–210 (GLGAVG), Asp-229, Lys-234, 298–300 (LGV), Phe-325, and Arg-375.

The protein belongs to the zinc-containing alcohol dehydrogenase family. Class-III subfamily. Homodimer. Zn(2+) serves as cofactor.

It is found in the cytoplasm. The enzyme catalyses a primary alcohol + NAD(+) = an aldehyde + NADH + H(+). It catalyses the reaction a secondary alcohol + NAD(+) = a ketone + NADH + H(+). The chain is Alcohol dehydrogenase-like 4 from Arabidopsis thaliana (Mouse-ear cress).